The following is a 95-amino-acid chain: uncharacterized protein (95 aa).

The segment at residues 1-24 (MKKLATLTALAGALTMAVATAAQA) is a signal peptide (or 21). Over residues 55 to 89 (EGKCGADKAKSAEGKCGEGKCGADKAKSAEGKCGE) the composition is skewed to basic and acidic residues. Residues 55–95 (EGKCGADKAKSAEGKCGEGKCGADKAKSAEGKCGEGKCGSK) form a disordered region.

This is an uncharacterized protein from Haemophilus influenzae (strain ATCC 51907 / DSM 11121 / KW20 / Rd).